Reading from the N-terminus, the 496-residue chain is Bifunctional protein HldE (496 aa).

The ribokinase stretch occupies residues 1–331 (MDPTPALAEI…AAVHQEEVSA (331 aa)). 206–209 (NRKE) provides a ligand contact to ATP. The active site involves aspartate 276. Residues 358 to 496 (FTNGCFDLLH…GGSRRSGDTL (139 aa)) form a cytidylyltransferase region.

In the N-terminal section; belongs to the carbohydrate kinase PfkB family. This sequence in the C-terminal section; belongs to the cytidylyltransferase family. In terms of assembly, homodimer.

It catalyses the reaction D-glycero-beta-D-manno-heptose 7-phosphate + ATP = D-glycero-beta-D-manno-heptose 1,7-bisphosphate + ADP + H(+). The catalysed reaction is D-glycero-beta-D-manno-heptose 1-phosphate + ATP + H(+) = ADP-D-glycero-beta-D-manno-heptose + diphosphate. It participates in nucleotide-sugar biosynthesis; ADP-L-glycero-beta-D-manno-heptose biosynthesis; ADP-L-glycero-beta-D-manno-heptose from D-glycero-beta-D-manno-heptose 7-phosphate: step 1/4. It functions in the pathway nucleotide-sugar biosynthesis; ADP-L-glycero-beta-D-manno-heptose biosynthesis; ADP-L-glycero-beta-D-manno-heptose from D-glycero-beta-D-manno-heptose 7-phosphate: step 3/4. Catalyzes the phosphorylation of D-glycero-D-manno-heptose 7-phosphate at the C-1 position to selectively form D-glycero-beta-D-manno-heptose-1,7-bisphosphate. Functionally, catalyzes the ADP transfer from ATP to D-glycero-beta-D-manno-heptose 1-phosphate, yielding ADP-D-glycero-beta-D-manno-heptose. The protein is Bifunctional protein HldE of Rhodospirillum rubrum (strain ATCC 11170 / ATH 1.1.1 / DSM 467 / LMG 4362 / NCIMB 8255 / S1).